Reading from the N-terminus, the 288-residue chain is Octanoyl-[GcvH]:protein N-octanoyltransferase (288 aa).

In terms of domain architecture, BPL/LPL catalytic spans 44–253 (AGGPPTFRLW…VLESAMGPQV (210 aa)). C148 acts as the Acyl-thioester intermediate in catalysis. The tract at residues 269-288 (GREGASETDPRRVAYGVDRP) is disordered. The segment covering 272–288 (GASETDPRRVAYGVDRP) has biased composition (basic and acidic residues).

The protein belongs to the octanoyltransferase LipL family.

It carries out the reaction N(6)-octanoyl-L-lysyl-[glycine-cleavage complex H protein] + L-lysyl-[lipoyl-carrier protein] = N(6)-octanoyl-L-lysyl-[lipoyl-carrier protein] + L-lysyl-[glycine-cleavage complex H protein]. It participates in protein modification; protein lipoylation via endogenous pathway; protein N(6)-(lipoyl)lysine from octanoyl-[acyl-carrier-protein]. Functionally, catalyzes the amidotransfer (transamidation) of the octanoyl moiety from octanoyl-GcvH to the lipoyl domain of the E2 subunit of lipoate-dependent enzymes. The chain is Octanoyl-[GcvH]:protein N-octanoyltransferase from Kyrpidia tusciae (strain DSM 2912 / NBRC 15312 / T2) (Bacillus tusciae).